A 167-amino-acid chain; its full sequence is Signal peptidase complex subunit 3A (167 aa).

Topologically, residues 1-11 (MHTFGYRANAL) are cytoplasmic. Residues 12–32 (LTFAVTALAFICAIASFSDKF) form a helical; Signal-anchor for type II membrane protein membrane-spanning segment. Topologically, residues 33–167 (SNQNPSAEIQ…PGYSLPDAYR (135 aa)) are lumenal. A glycan (N-linked (GlcNAc...) asparagine) is linked at Asn136.

The protein belongs to the SPCS3 family. Component of the signal peptidase complex (SPC) composed of a catalytic subunit SEC11 and three accessory subunits SPCS1, SPCS2 and SPCS3. The complex induces a local thinning of the ER membrane which is used to measure the length of the signal peptide (SP) h-region of protein substrates. This ensures the selectivity of the complex towards h-regions shorter than 18-20 amino acids.

It localises to the endoplasmic reticulum membrane. Functionally, essential component of the signal peptidase complex (SPC) which catalyzes the cleavage of N-terminal signal sequences from nascent proteins as they are translocated into the lumen of the endoplasmic reticulum. Essential for the SPC catalytic activity, possibly by stabilizing and positioning the active center of the complex close to the lumenal surface. This Arabidopsis thaliana (Mouse-ear cress) protein is Signal peptidase complex subunit 3A.